Here is a 481-residue protein sequence, read N- to C-terminus: Palmitoyltransferase PFA4 (481 aa).

Residues 1 to 22 (MTNQDPDDGAYPSSQSDDDGIE) form a disordered region. The Cytoplasmic segment spans residues 1–66 (MTNQDPDDGA…APLTGRRRTP (66 aa)). The chain crosses the membrane as a helical span at residues 67 to 87 (LSWTEVIWVSLTLLLIAVLGY). Residues 88–108 (SSQLYVMLPYYEKTPSFSPQA) lie on the Lumenal side of the membrane. A helical membrane pass occupies residues 109–129 (LAAVLVPFNLGLLAIYYNYWL). The Cytoplasmic segment spans residues 130–223 (CVTTDAGSVP…LANCVGHFNH (94 aa)). The DHHC domain occupies 181 to 231 (RYCKTCSAFKPPRSHHCKTCQRCVLRMDHHCPWLANCVGHFNHAHFIRFLF). Catalysis depends on C211, which acts as the S-palmitoyl cysteine intermediate. Residues 224 to 244 (AHFIRFLFYVDVTCLYHLIMI) form a helical membrane-spanning segment. At 245–265 (SCRVLDSFNSYTYWREPCARE) the chain is on the lumenal side. The helical transmembrane segment at 266 to 286 (LVWLVVNYALCIPVILLVGIF) threads the bilayer. The Cytoplasmic portion of the chain corresponds to 287–481 (SLYHFYCLAV…EVRPHTPWSV (195 aa)). Residues 370 to 481 (SQYRWPPKDP…EVRPHTPWSV (112 aa)) are disordered. Over residues 418–431 (SSPSSSDSHSSLHL) the composition is skewed to low complexity. Composition is skewed to basic and acidic residues over residues 441–452 (LPHHFDPPHDPD) and 466–475 (RGSEGYEVRP).

The protein belongs to the DHHC palmitoyltransferase family. PFA4 subfamily.

Its subcellular location is the endoplasmic reticulum membrane. The enzyme catalyses L-cysteinyl-[protein] + hexadecanoyl-CoA = S-hexadecanoyl-L-cysteinyl-[protein] + CoA. Mediates the reversible addition of palmitate to target proteins, thereby regulating their membrane association and biological function. The polypeptide is Palmitoyltransferase PFA4 (Mycosarcoma maydis (Corn smut fungus)).